Reading from the N-terminus, the 79-residue chain is Dolichyl-diphosphooligosaccharide--protein glycosyltransferase subunit TMEM258 (79 aa).

2 helical membrane-spanning segments follow: residues 18–38 (LPLL…AFTM) and 55–75 (FIAA…LLWV).

This sequence belongs to the OST5 family. Component of the oligosaccharyltransferase (OST) complex.

The protein resides in the membrane. The protein operates within protein modification; protein glycosylation. In terms of biological role, subunit of the oligosaccharyl transferase (OST) complex that catalyzes the initial transfer of a defined glycan (Glc(3)Man(9)GlcNAc(2) in eukaryotes) from the lipid carrier dolichol-pyrophosphate to an asparagine residue within an Asn-X-Ser/Thr consensus motif in nascent polypeptide chains, the first step in protein N-glycosylation. N-glycosylation occurs cotranslationally and the complex associates with the Sec61 complex at the channel-forming translocon complex that mediates protein translocation across the endoplasmic reticulum (ER). All subunits are required for a maximal enzyme activity. The protein is Dolichyl-diphosphooligosaccharide--protein glycosyltransferase subunit TMEM258 of Caenorhabditis briggsae.